The chain runs to 213 residues: CDP-diacylglycerol--inositol 3-phosphatidyltransferase (213 aa).

Over 1 to 5 (MPEEN) the chain is Cytoplasmic. Residues 6 to 26 (IFLFVPNLIGYARIVFAIISF) traverse the membrane as a helical segment. A topological domain (lumenal) is located at residue Tyr-27. A helical transmembrane segment spans residues 28-48 (FMPCCPFTASSFYLLSGLLDA). Asp-47 and Asp-50 together coordinate Mg(2+). The Cytoplasmic segment spans residues 49 to 73 (FDGHAARALNQGTRFGAMLDMLTDR). Residues Gly-51, Arg-55, and Thr-61 each contribute to the a CDP-1,2-diacyl-sn-glycerol site. The Mg(2+) site is built by Asp-68 and Asp-72. The active-site Proton acceptor is the Asp-72. Residues 74-94 (CATMCLLVNLALLYPRATLLF) form a helical membrane-spanning segment. Gln-95 is a topological domain (lumenal). A helical transmembrane segment spans residues 96 to 116 (LSMSLDVASHWLHLHSSVVRG). At 117–139 (SESHKMIDLSGNPVLRIYYTSRP) the chain is on the cytoplasmic side. A helical membrane pass occupies residues 140–160 (ALFTLCAGNELFYCLLYLFNF). At 161–174 (SEGPLVGSVGLFRM) the chain is on the lumenal side. The helical transmembrane segment at 175–195 (GLWITAPIALLKSIISVIHLV) threads the bilayer. Residues 196 to 213 (TAARNMAALDAADRAKKK) lie on the Cytoplasmic side of the membrane.

This sequence belongs to the CDP-alcohol phosphatidyltransferase class-I family. Requires Mn(2+) as cofactor. Mg(2+) serves as cofactor. In terms of tissue distribution, detected in liver (at protein level). Widely expressed. Highly expressed in the brain and kidney; lower levels in heart, spleen, lung, liver, skeletal muscle and testis.

The protein localises to the endoplasmic reticulum membrane. The protein resides in the cell membrane. It carries out the reaction a CDP-1,2-diacyl-sn-glycerol + myo-inositol = a 1,2-diacyl-sn-glycero-3-phospho-(1D-myo-inositol) + CMP + H(+). Its function is as follows. Catalyzes the biosynthesis of phosphatidylinositol (PtdIns) as well as PtdIns:inositol exchange reaction. May thus act to reduce an excessive cellular PtdIns content. The exchange activity is due to the reverse reaction of PtdIns synthase and is dependent on CMP, which is tightly bound to the enzyme. The protein is CDP-diacylglycerol--inositol 3-phosphatidyltransferase of Rattus norvegicus (Rat).